Consider the following 383-residue polypeptide: Ribosomal RNA large subunit methyltransferase G (383 aa).

This sequence belongs to the methyltransferase superfamily. RlmG family.

The protein resides in the cytoplasm. It catalyses the reaction guanosine(1835) in 23S rRNA + S-adenosyl-L-methionine = N(2)-methylguanosine(1835) in 23S rRNA + S-adenosyl-L-homocysteine + H(+). Its function is as follows. Specifically methylates the guanine in position 1835 (m2G1835) of 23S rRNA. This is Ribosomal RNA large subunit methyltransferase G from Shewanella amazonensis (strain ATCC BAA-1098 / SB2B).